A 239-amino-acid polypeptide reads, in one-letter code: Orotidine 5'-phosphate decarboxylase (239 aa).

Substrate-binding positions include aspartate 15, lysine 37, 64 to 73 (DLKYHDIPNT), threonine 126, arginine 187, glutamine 196, glycine 216, and arginine 217. Lysine 66 functions as the Proton donor in the catalytic mechanism.

The protein belongs to the OMP decarboxylase family. Type 1 subfamily. Homodimer.

It catalyses the reaction orotidine 5'-phosphate + H(+) = UMP + CO2. Its pathway is pyrimidine metabolism; UMP biosynthesis via de novo pathway; UMP from orotate: step 2/2. Its function is as follows. Catalyzes the decarboxylation of orotidine 5'-monophosphate (OMP) to uridine 5'-monophosphate (UMP). The protein is Orotidine 5'-phosphate decarboxylase of Geotalea daltonii (strain DSM 22248 / JCM 15807 / FRC-32) (Geobacter daltonii).